The chain runs to 56 residues: Small ribosomal subunit protein uS14 (56 aa).

Residues C21, C24, C39, and C42 each contribute to the Zn(2+) site.

The protein belongs to the universal ribosomal protein uS14 family. Requires Zn(2+) as cofactor.

The sequence is that of Small ribosomal subunit protein uS14 (RPS29) from Griffithsia japonica (Red alga).